The chain runs to 146 residues: Large ribosomal subunit protein uL15 (146 aa).

A disordered region spans residues Met1–Met54.

Belongs to the universal ribosomal protein uL15 family. In terms of assembly, part of the 50S ribosomal subunit.

Functionally, binds to the 23S rRNA. This Mycobacterium marinum (strain ATCC BAA-535 / M) protein is Large ribosomal subunit protein uL15.